The primary structure comprises 86 residues: Large ribosomal subunit protein eL43 (86 aa).

The C4-type zinc-finger motif lies at Cys38–Cys59.

This sequence belongs to the eukaryotic ribosomal protein eL43 family. Zn(2+) is required as a cofactor.

This Thermococcus onnurineus (strain NA1) protein is Large ribosomal subunit protein eL43.